We begin with the raw amino-acid sequence, 282 residues long: MASSATAPNSLSFFSSSLFLSSSHQIPKTYISVSKLGSGRVSKPLSVSSQLATLPILSFEGEKVGETYLDLKAAPEDTARAVVHRAIVTDLNNKRRGTASTLTRGEVRGGGIKPYSQKKTGHARRGSQRTPLRPGGGVVFGPRPKDWSIKINRKEKKLAISTALSSAASAEGGAIVVEEFGEKFEKPKTKDFLAAMQRWGLDPKEKAMFLMIDVDENVAKSSRNIGTLRMLTPRTLNLFDILNADKLVLTPAAVEFLNARYGVDAVEEEDDDEDETEGSEEA.

The transit peptide at 1-49 (MASSATAPNSLSFFSSSLFLSSSHQIPKTYISVSKLGSGRVSKPLSVSS) directs the protein to the chloroplast. Residues 106 to 138 (EVRGGGIKPYSQKKTGHARRGSQRTPLRPGGGV) are disordered.

This sequence belongs to the universal ribosomal protein uL4 family. In terms of assembly, part of the 50S ribosomal subunit.

It is found in the plastid. The protein resides in the chloroplast. In terms of biological role, this protein binds directly and specifically to 23S rRNA. May play a role in plastid transcriptional regulation. This chain is Large ribosomal subunit protein uL4c (RPL4), found in Arabidopsis thaliana (Mouse-ear cress).